Reading from the N-terminus, the 294-residue chain is Nucleotide-binding protein Tfu_2020 (294 aa).

An ATP-binding site is contributed by 18-25 (GMSGAGRS). 69–72 (DVRS) contributes to the GTP binding site.

This sequence belongs to the RapZ-like family.

In terms of biological role, displays ATPase and GTPase activities. This Thermobifida fusca (strain YX) protein is Nucleotide-binding protein Tfu_2020.